Here is a 115-residue protein sequence, read N- to C-terminus: Parathyroid hormone (115 aa).

Positions 1–25 (MMSANTVAKVMIIMLAVCLLTQTDG) are cleaved as a signal peptide. The propeptide occupies 26 to 31 (KPVRKR). Residues 51-69 (RMQWLRRKLQDMHNFVSLG) are important for receptor binding.

The protein belongs to the parathyroid hormone family. In terms of assembly, interacts with PTH1R (via N-terminal extracellular domain). Highly expressed in the parathyroid gland. Also expressed in the placenta, thymus and testis.

It is found in the secreted. In terms of biological role, parathyroid hormone elevates calcium level by dissolving the salts in bone and preventing their renal excretion. Acts by binding to its receptor, PTH1R, activating G protein-coupled receptor signaling. Stimulates [1-14C]-2-deoxy-D-glucose (2DG) transport and glycogen synthesis in osteoblastic cells. This chain is Parathyroid hormone, found in Mus musculus (Mouse).